A 1066-amino-acid chain; its full sequence is Allene oxide synthase-lipoxygenase protein (1066 aa).

Residues 1-371 (MTWKNFGFEI…LKIGSLVPAG (371 aa)) form an allene oxide synthase region. Heme is bound at residue tyrosine 353. The segment at 372 to 1066 (QNAIYNVEVE…PERIPNGTAI (695 aa)) is arachidonate 8-lipoxygenase. The region spanning 374–490 (AIYNVEVETG…KDMVLFPGEA (117 aa)) is the PLAT domain. Ca(2+) contacts are provided by histidine 387, glycine 389, threonine 390, aspartate 391, asparagine 416, aspartate 417, glutamate 419, aspartate 452, and aspartate 454. The Lipoxygenase domain maps to 491-1066 (TLPFNEVPAI…PERIPNGTAI (576 aa)). The Fe cation site is built by histidine 757, histidine 762, histidine 943, asparagine 947, and isoleucine 1066.

In the C-terminal section; belongs to the lipoxygenase family. In terms of assembly, dimer. It depends on Ca(2+) as a cofactor. Requires Fe cation as cofactor. Heme is required as a cofactor.

The protein resides in the cytoplasm. It localises to the membrane. It carries out the reaction (5Z,8Z,11Z,14Z)-eicosatetraenoate + O2 = (8R)-hydroperoxy-(5Z,9E,11Z,14Z)-eicosatetraenoate. The catalysed reaction is (8R)-hydroperoxy-(5Z,9E,11Z,14Z)-eicosatetraenoate = 8,9-epoxy-(5Z,9E,11Z,14Z)-eicosatetraenoate + H2O. It catalyses the reaction (5Z,8Z,11Z,14Z,17Z)-eicosapentaenoate + O2 = (8R)-hydroperoxy-(5Z,9E,11Z,14Z,17Z)-eicosapentaenoate. The enzyme catalyses (4Z,7Z,10Z,13Z,16Z,19Z)-docosahexaenoate + O2 = 10-hydroperoxy-(4Z,7Z,11E,13Z,16Z,19Z)-docosahexaenoate. It carries out the reaction (8Z,11Z,14Z)-eicosatrienoate + O2 = (8R)-hydroperoxy-(9E,11Z,14Z)-eicosatrienoate. The catalysed reaction is (8Z,11Z,14Z)-eicosatrienoate + O2 = 10-hydroperoxy-(8Z,11Z,14Z)-eicosatrienoate. It catalyses the reaction (8Z,11Z,14Z)-eicosatrienoate + O2 = 11-hydroperoxy-(8Z,12E,14Z)-eicosatrienoate. The protein operates within lipid metabolism; arachidonate metabolism. It functions in the pathway lipid metabolism; fatty acid metabolism. Lipoxygenase activity is stimulated by calcium, sodium, lithium and potassium ions. Calcium binding promotes interaction with membranes and thus facilitates access to substrates. Functionally, bifunctional enzyme which is responsible for allene oxide biosynthesis via a two-step reaction; first the lipoxygenase reaction that converts polyunsaturated fatty acids such as arachidonate ((5Z,8Z,11Z,14Z)-eicosatetraenoate) into a (8R)-hydroperoxide intermediate ((8R)-hydroperoxy-(5Z,9E,11Z,14Z)-eicosatetraenoate) followed by the allene oxide synthase reaction that converts the hydroperoxide intermediate ((8R)-hydroperoxy-(5Z,9E,11Z,14Z)-eicosatetraenoate) into the allene oxide (8,9-epoxy-(5Z,9E,11Z,14Z)-eicosatetraenoate). Shows preference for C20 or C22 highly polyunsaturated fatty acids and no activity with C18 fatty acids in vitro. Fatty acid allene oxides are intermediates in the formation of cyclopentenones or hydrolytic products in marine systems, most notably the prostanoid-related clavulones. In Plexaura homomalla (Black sea rod), this protein is Allene oxide synthase-lipoxygenase protein.